The chain runs to 288 residues: uncharacterized protein (288 aa).

Residues 126–136 (VAAPASTPVAP) are compositionally biased toward low complexity. Disordered stretches follow at residues 126–227 (VAAP…VTSV) and 258–288 (KEKD…SSEE). The span at 143–152 (RKEFKNEKWK) shows a compositional bias: basic and acidic residues. Basic residues predominate over residues 153–162 (DKKKQGRRRN). Residues 180-194 (VAEECLQESSSEEGD) are compositionally biased toward acidic residues. Residues 278 to 288 (TLVHDRISSEE) show a composition bias toward basic and acidic residues.

It belongs to the chlamydial CPn_0623/CT_504/TC_0791 family.

This is an uncharacterized protein from Chlamydia trachomatis serovar D (strain ATCC VR-885 / DSM 19411 / UW-3/Cx).